A 247-amino-acid chain; its full sequence is MRLVLVRHGESEWNKLNLFTGWTDVDLSEKGVEEAKEGGTYLKKEGFDFDICYTSYLKRAIHTLNYILSQMDREWLPVIKTWKLNERHYGGLQGLNKAETAEKYGEDQVKIWRRSFDIAPPVLEEGDKRCPYLQEQYRGIEKSELPLTESLKDTIARAVPFFEKTIKPQMLEGKRILITAHGNSLRALVKYFENLSDEEIISVNIPTGVPLVYEFDKNFKVLSKRYLGDQEKINAKINAVANQGKKK.

Residues 7–14 (RHGESEWN), 20–21 (TG), arginine 59, 86–89 (ERHY), lysine 97, 113–114 (RR), and 182–183 (GN) contribute to the substrate site. Histidine 8 functions as the Tele-phosphohistidine intermediate in the catalytic mechanism. The active-site Proton donor/acceptor is glutamate 86.

It belongs to the phosphoglycerate mutase family. BPG-dependent PGAM subfamily.

It carries out the reaction (2R)-2-phosphoglycerate = (2R)-3-phosphoglycerate. It functions in the pathway carbohydrate degradation; glycolysis; pyruvate from D-glyceraldehyde 3-phosphate: step 3/5. Catalyzes the interconversion of 2-phosphoglycerate and 3-phosphoglycerate. The chain is 2,3-bisphosphoglycerate-dependent phosphoglycerate mutase from Treponema denticola (strain ATCC 35405 / DSM 14222 / CIP 103919 / JCM 8153 / KCTC 15104).